The following is an 88-amino-acid chain: MLVTDKKKEIITTHKLHDSDTGSPEVQIALLTERIIYLTEHFKVHKKDHHSRRGLLKIVGQRRRLLDYLKKKDVERYRSIIEKLGIRR.

Belongs to the universal ribosomal protein uS15 family. Part of the 30S ribosomal subunit. Forms a bridge to the 50S subunit in the 70S ribosome, contacting the 23S rRNA.

Functionally, one of the primary rRNA binding proteins, it binds directly to 16S rRNA where it helps nucleate assembly of the platform of the 30S subunit by binding and bridging several RNA helices of the 16S rRNA. Forms an intersubunit bridge (bridge B4) with the 23S rRNA of the 50S subunit in the ribosome. This Geobacter sulfurreducens (strain ATCC 51573 / DSM 12127 / PCA) protein is Small ribosomal subunit protein uS15.